Here is a 232-residue protein sequence, read N- to C-terminus: Orotidine 5'-phosphate decarboxylase (232 aa).

Substrate is bound by residues D11, K33, 60-69 (DLKFHDIPNT), T120, R181, Q190, G210, and R211. K62 serves as the catalytic Proton donor.

It belongs to the OMP decarboxylase family. Type 1 subfamily. Homodimer.

It carries out the reaction orotidine 5'-phosphate + H(+) = UMP + CO2. It participates in pyrimidine metabolism; UMP biosynthesis via de novo pathway; UMP from orotate: step 2/2. Its function is as follows. Catalyzes the decarboxylation of orotidine 5'-monophosphate (OMP) to uridine 5'-monophosphate (UMP). The sequence is that of Orotidine 5'-phosphate decarboxylase from Vibrio vulnificus (strain YJ016).